We begin with the raw amino-acid sequence, 399 residues long: Lysosomal acid lipase/cholesteryl ester hydrolase (399 aa).

An N-terminal signal peptide occupies residues 1 to 27; that stretch reads MKMRFLGLVVCLVLWTLHSEGSGGKLT. Residues 28 to 76 constitute a propeptide, removed in mature form; the sequence is AVDPETNMNVSEIISYWGFPSEEYLVETEDGYILCLNRIPHGRKNHSDK. N-linked (GlcNAc...) asparagine glycosylation is found at N36, N72, N101, and N161. The region spanning 80–380 is the AB hydrolase-1 domain; it reads PVVFLQHGLL…EWEHLDFIWG (301 aa). S174 functions as the Charge relay system in the catalytic mechanism. N273 and N321 each carry an N-linked (GlcNAc...) asparagine glycan. The active-site Charge relay system is H374.

This sequence belongs to the AB hydrolase superfamily. Lipase family. Monomer. Glycosylation is not essential for catalytic activity. In terms of tissue distribution, most abundantly expressed in brain, lung, kidney and mammary gland, a moderate expression seen in placenta and expressed at low levels in the liver and heart.

The protein localises to the lysosome. It carries out the reaction a sterol ester + H2O = a sterol + a fatty acid + H(+). The enzyme catalyses cholesteryl (9Z-octadecenoate) + H2O = cholesterol + (9Z)-octadecenoate + H(+). The catalysed reaction is a triacylglycerol + H2O = a 1,2-diacylglycerol + a fatty acid + H(+). It catalyses the reaction 1,2-di-(9Z-octadecenoyl)-glycerol + (9Z)-octadecenoate + H(+) = 1,2,3-tri-(9Z-octadecenoyl)-glycerol + H2O. It carries out the reaction a 1,2-diacylglycerol + H2O = a 1-acylglycerol + a fatty acid + H(+). The enzyme catalyses 1,2-di-(9Z-octadecenoyl)-glycerol + H2O = 1-(9Z-octadecenoyl)-glycerol + (9Z)-octadecenoate + H(+). The catalysed reaction is a 1,3-diacylglycerol + H2O = a 1-acylglycerol + a fatty acid + H(+). It catalyses the reaction 1,3-di-(9Z-octadecenoyl)-glycerol + H2O = 1-(9Z-octadecenoyl)-glycerol + (9Z)-octadecenoate + H(+). Functionally, catalyzes the deacylation of cholesteryl ester core lipids of endocytosed low density lipoproteins to generate free fatty acids and cholesterol. Hydrolyzes triglycerides (1,2,3-triacylglycerol) and diglycerides (such as 1,2-diacylglycerol and 1,3-diacylglycerol) with preference for the acyl moieties at the sn-1 or sn-3 positions. The chain is Lysosomal acid lipase/cholesteryl ester hydrolase (LIPA) from Homo sapiens (Human).